The sequence spans 624 residues: Coagulation factor XI (624 aa).

An N-terminal signal peptide occupies residues 1-18 (MTSLHQVLYFIFFASVSS). Apple domains are found at residues 20–103 (CVTK…FKQC), 110–193 (CSKD…LKSC), 200–283 (CIRD…LQHC), and 291–376 (CHPS…LRLC). 17 cysteine pairs are disulfide-bonded: Cys20-Cys103, Cys46-Cys76, Cys50-Cys56, Cys110-Cys193, Cys136-Cys165, Cys140-Cys146, Cys200-Cys283, Cys226-Cys255, Cys230-Cys236, Cys291-Cys376, Cys317-Cys348, Cys321-Cys327, Cys382-Cys499, Cys415-Cys431, Cys513-Cys580, Cys544-Cys559, and Cys570-Cys598. Residues Asn90 and Asn126 are each glycosylated (N-linked (GlcNAc...) asparagine). A glycan (N-linked (GlcNAc...) asparagine) is linked at Asn297. The Peptidase S1 domain maps to 390-622 (VVGGAASVHG…YVDWILEKTQ (233 aa)). Residue His430 is the Charge relay system of the active site. Asn449 carries an N-linked (GlcNAc...) asparagine glycan. Catalysis depends on Asp479, which acts as the Charge relay system. An N-linked (GlcNAc...) asparagine glycan is attached at Asn490. Residue 547 to 550 (RYRR) participates in heparin binding. Residue Ser574 is the Charge relay system of the active site.

It belongs to the peptidase S1 family. Plasma kallikrein subfamily. As to quaternary structure, homodimer; disulfide-linked. After activation the heavy and light chains are also linked by a disulfide bond. Interacts (activated) with F9 (inactive and activated) in calcium-dependent manner. Forms a heterodimer with SERPINA5. Post-translationally, activated by factor XIIa (or XII), which cleaves each polypeptide after Arg-389 into the light chain, which contains the active site, and the heavy chain, which associates with high molecular weight (HMW) kininogen. Activated by F12 (activated); the presence of negatively charged surfaces accelerates activation. Activated by F2 (thrombin); the presence of negatively charged surfaces, such as polyphosphate and dextran sulfate, strongly accelerates activation. Autoactivated; the presence of negatively charged surfaces, such as polyphosphate and dextran sulfate, accelerates autoactivation and autolysis. N-glycosylated on both chains. N-glycosylated sites mainly consist of nonfucosylated sialylated biantennary (in high abundance) and/or triantennary (in low abundance) complex structures.

It is found in the secreted. It catalyses the reaction Selective cleavage of Arg-|-Ala and Arg-|-Val bonds in factor IX to form factor IXa.. With respect to regulation, inhibited by SERPINA5. Factor XI triggers the middle phase of the intrinsic pathway of blood coagulation by activating factor IX. In Mus musculus (Mouse), this protein is Coagulation factor XI (F11).